The chain runs to 356 residues: S-adenosylmethionine:tRNA ribosyltransferase-isomerase (356 aa).

This sequence belongs to the QueA family. Monomer.

It localises to the cytoplasm. It carries out the reaction 7-aminomethyl-7-carbaguanosine(34) in tRNA + S-adenosyl-L-methionine = epoxyqueuosine(34) in tRNA + adenine + L-methionine + 2 H(+). Its pathway is tRNA modification; tRNA-queuosine biosynthesis. Its function is as follows. Transfers and isomerizes the ribose moiety from AdoMet to the 7-aminomethyl group of 7-deazaguanine (preQ1-tRNA) to give epoxyqueuosine (oQ-tRNA). This chain is S-adenosylmethionine:tRNA ribosyltransferase-isomerase, found in Xanthomonas euvesicatoria pv. vesicatoria (strain 85-10) (Xanthomonas campestris pv. vesicatoria).